Here is a 159-residue protein sequence, read N- to C-terminus: Pathogenesis-related leaf protein 6 (159 aa).

The N-terminal stretch at 1–24 (MGLFNISLLLTCLMVLAIFHSCEA) is a signal peptide. Gln25 is subject to Pyrrolidone carboxylic acid. The 116-residue stretch at 32-147 (LAVHNDARAQ…NGWWFISCNY (116 aa)) folds into the SCP domain. Intrachain disulfides connect Cys68–Cys136, Cys109–Cys115, and Cys131–Cys145.

The protein belongs to the CRISP family.

Functionally, probably involved in the defense reaction of plants against pathogens. Has antifungal activity. This Solanum lycopersicum (Tomato) protein is Pathogenesis-related leaf protein 6 (PR1B1).